The primary structure comprises 413 residues: Multifunctional CCA protein (413 aa).

ATP is bound by residues Gly-8 and Arg-11. Residues Gly-8 and Arg-11 each contribute to the CTP site. The Mg(2+) site is built by Asp-21 and Asp-23. Residues Arg-91, Arg-137, and Arg-140 each contribute to the ATP site. CTP contacts are provided by Arg-91, Arg-137, and Arg-140. The 102-residue stretch at 228-329 (TGVHTLMTLS…VKLFDAIDAW (102 aa)) folds into the HD domain.

The protein belongs to the tRNA nucleotidyltransferase/poly(A) polymerase family. Bacterial CCA-adding enzyme type 1 subfamily. As to quaternary structure, monomer. Can also form homodimers and oligomers. The cofactor is Mg(2+). Ni(2+) is required as a cofactor.

The catalysed reaction is a tRNA precursor + 2 CTP + ATP = a tRNA with a 3' CCA end + 3 diphosphate. It carries out the reaction a tRNA with a 3' CCA end + 2 CTP + ATP = a tRNA with a 3' CCACCA end + 3 diphosphate. Functionally, catalyzes the addition and repair of the essential 3'-terminal CCA sequence in tRNAs without using a nucleic acid template. Adds these three nucleotides in the order of C, C, and A to the tRNA nucleotide-73, using CTP and ATP as substrates and producing inorganic pyrophosphate. tRNA 3'-terminal CCA addition is required both for tRNA processing and repair. Also involved in tRNA surveillance by mediating tandem CCA addition to generate a CCACCA at the 3' terminus of unstable tRNAs. While stable tRNAs receive only 3'-terminal CCA, unstable tRNAs are marked with CCACCA and rapidly degraded. This chain is Multifunctional CCA protein, found in Salmonella agona (strain SL483).